A 123-amino-acid chain; its full sequence is Small ribosomal subunit protein uS12 (123 aa).

At Asp-89 the chain carries 3-methylthioaspartic acid.

Belongs to the universal ribosomal protein uS12 family. In terms of assembly, part of the 30S ribosomal subunit. Contacts proteins S8 and S17. May interact with IF1 in the 30S initiation complex.

Functionally, with S4 and S5 plays an important role in translational accuracy. In terms of biological role, interacts with and stabilizes bases of the 16S rRNA that are involved in tRNA selection in the A site and with the mRNA backbone. Located at the interface of the 30S and 50S subunits, it traverses the body of the 30S subunit contacting proteins on the other side and probably holding the rRNA structure together. The combined cluster of proteins S8, S12 and S17 appears to hold together the shoulder and platform of the 30S subunit. The protein is Small ribosomal subunit protein uS12 of Phenylobacterium zucineum (strain HLK1).